Reading from the N-terminus, the 213-residue chain is Nicolin-1 (213 aa).

In terms of assembly, part of the neuronal tubulin polyglutamylase complex which contains TPGS1, TPGS2, TTLL1, LRRC49 and NICN1.

Its subcellular location is the nucleus. The polypeptide is Nicolin-1 (NICN1) (Canis lupus familiaris (Dog)).